Here is a 244-residue protein sequence, read N- to C-terminus: Phosphoadenosine 5'-phosphosulfate reductase (244 aa).

Cys239 serves as the catalytic Nucleophile; cysteine thiosulfonate intermediate.

This sequence belongs to the PAPS reductase family. CysH subfamily.

Its subcellular location is the cytoplasm. It catalyses the reaction [thioredoxin]-disulfide + sulfite + adenosine 3',5'-bisphosphate + 2 H(+) = [thioredoxin]-dithiol + 3'-phosphoadenylyl sulfate. The protein operates within sulfur metabolism; hydrogen sulfide biosynthesis; sulfite from sulfate: step 3/3. Functionally, catalyzes the formation of sulfite from phosphoadenosine 5'-phosphosulfate (PAPS) using thioredoxin as an electron donor. The sequence is that of Phosphoadenosine 5'-phosphosulfate reductase from Escherichia coli O6:K15:H31 (strain 536 / UPEC).